A 318-amino-acid polypeptide reads, in one-letter code: Aspartate carbamoyltransferase catalytic subunit (318 aa).

Carbamoyl phosphate-binding residues include arginine 54 and threonine 55. Lysine 82 is a binding site for L-aspartate. Carbamoyl phosphate-binding residues include arginine 104, histidine 134, and glutamine 137. The L-aspartate site is built by arginine 174 and arginine 230. Carbamoyl phosphate is bound by residues glycine 271 and proline 272.

The protein belongs to the aspartate/ornithine carbamoyltransferase superfamily. ATCase family. In terms of assembly, heterododecamer (2C3:3R2) of six catalytic PyrB chains organized as two trimers (C3), and six regulatory PyrI chains organized as three dimers (R2).

It catalyses the reaction carbamoyl phosphate + L-aspartate = N-carbamoyl-L-aspartate + phosphate + H(+). It functions in the pathway pyrimidine metabolism; UMP biosynthesis via de novo pathway; (S)-dihydroorotate from bicarbonate: step 2/3. In terms of biological role, catalyzes the condensation of carbamoyl phosphate and aspartate to form carbamoyl aspartate and inorganic phosphate, the committed step in the de novo pyrimidine nucleotide biosynthesis pathway. This chain is Aspartate carbamoyltransferase catalytic subunit, found in Clavibacter sepedonicus (Clavibacter michiganensis subsp. sepedonicus).